The following is a 281-amino-acid chain: Undecaprenyl-diphosphatase (281 aa).

The next 8 helical transmembrane spans lie at 4 to 24, 45 to 65, 89 to 109, 113 to 133, 152 to 172, 190 to 210, 225 to 245, and 257 to 277; these read IEIL…WLPI, AFMS…VMVI, WLKV…DDWF, FHNM…FIYL, LPYT…LPGT, SVVT…ASAL, GQLF…MVAI, and FTLF…YSFV.

Belongs to the UppP family.

The protein resides in the cell membrane. The enzyme catalyses di-trans,octa-cis-undecaprenyl diphosphate + H2O = di-trans,octa-cis-undecaprenyl phosphate + phosphate + H(+). Functionally, catalyzes the dephosphorylation of undecaprenyl diphosphate (UPP). Confers resistance to bacitracin. The chain is Undecaprenyl-diphosphatase from Streptococcus pneumoniae (strain Hungary19A-6).